A 473-amino-acid polypeptide reads, in one-letter code: Hyaluronidase-2 (473 aa).

Residues 1–20 (MRAGLGPIITLALVLEVAWA) form the signal peptide. 2 disulfide bridges follow: Cys47–Cys340 and Cys211–Cys227. N-linked (GlcNAc...) asparagine glycans are attached at residues Asn74 and Asn103. Residue Glu135 is the Proton donor of the active site. N-linked (GlcNAc...) asparagine glycosylation is present at Asn357. One can recognise an EGF-like domain in the interval 361–439 (ATQYCSWTQC…YLGWGGEQCQ (79 aa)). Cystine bridges form between Cys365–Cys376, Cys370–Cys427, and Cys429–Cys438. The GPI-anchor amidated aspartate moiety is linked to residue Asp448. Residues 449 to 473 (ASRAWAGAHLASLLGLVAMTLTWTL) constitute a propeptide, removed in mature form.

The protein belongs to the glycosyl hydrolase 56 family. In terms of assembly, interacts with MST1R.

The protein resides in the cell membrane. The catalysed reaction is Random hydrolysis of (1-&gt;4)-linkages between N-acetyl-beta-D-glucosamine and D-glucuronate residues in hyaluronate.. Its function is as follows. Catalyzes hyaluronan degradation into small fragments that are endocytosed and degraded in lysosomes by HYAL1 and exoglycosidases. Essential for the breakdown of extracellular matrix hyaluronan. This Rattus norvegicus (Rat) protein is Hyaluronidase-2 (Hyal2).